The primary structure comprises 445 residues: E3 ubiquitin-protein ligase pellino homolog 3 (445 aa).

A disordered region spans residues Met-1 to Gly-24. Ser-11 carries the post-translational modification Phosphoserine. Residues Pro-12 to Gly-24 show a composition bias toward polar residues.

Belongs to the pellino family. As to quaternary structure, interacts with TRAF6, MAP3K14 and MAP3K7. Post-translationally, phosphorylated by IRAK1 enhancing its E3 ligase activity.

It carries out the reaction S-ubiquitinyl-[E2 ubiquitin-conjugating enzyme]-L-cysteine + [acceptor protein]-L-lysine = [E2 ubiquitin-conjugating enzyme]-L-cysteine + N(6)-ubiquitinyl-[acceptor protein]-L-lysine.. Its pathway is protein modification; protein ubiquitination. In terms of biological role, E3 ubiquitin ligase catalyzing the covalent attachment of ubiquitin moieties onto substrate proteins. Involved in the TLR and IL-1 signaling pathways via interaction with the complex containing IRAK kinases and TRAF6. Mediates 'Lys-63'-linked polyubiquitination of IRAK1. Can activate AP1/JUN and ELK1. Acts as a regulator of innate immunity by mediating 'Lys-63'-linked polyubiquitination of RIPK2 downstream of NOD1 and NOD2, thereby transforming RIPK2 into a scaffolding protein for downstream effectors, ultimately leading to activation of the NF-kappa-B and MAP kinases signaling. Catalyzes 'Lys-63'-linked polyubiquitination of RIPK2 in parallel of XIAP. This Mus musculus (Mouse) protein is E3 ubiquitin-protein ligase pellino homolog 3.